The following is a 148-amino-acid chain: Large ribosomal subunit protein uL15 (148 aa).

Residues 1 to 51 (MNLSNLKPAEGSTKTRKRIGRGPGSGLGGTSTRGHKGAKSRSGYKNKIGFE) form a disordered region. Residues 21 to 31 (RGPGSGLGGTS) are compositionally biased toward gly residues. Positions 33–44 (RGHKGAKSRSGY) are enriched in basic residues.

The protein belongs to the universal ribosomal protein uL15 family. In terms of assembly, part of the 50S ribosomal subunit.

Functionally, binds to the 23S rRNA. This is Large ribosomal subunit protein uL15 from Parabacteroides distasonis (strain ATCC 8503 / DSM 20701 / CIP 104284 / JCM 5825 / NCTC 11152).